The sequence spans 184 residues: Large ribosomal subunit protein uL5c (184 aa).

The protein belongs to the universal ribosomal protein uL5 family. As to quaternary structure, part of the 50S ribosomal subunit; contacts the 5S rRNA.

It localises to the plastid. It is found in the chloroplast. In terms of biological role, binds 5S rRNA, forms part of the central protuberance of the 50S subunit. The protein is Large ribosomal subunit protein uL5c (rpl5) of Mesostigma viride (Green alga).